Reading from the N-terminus, the 664-residue chain is Probable 3',5'-cyclic phosphodiesterase pde-1 (664 aa).

2 disordered regions span residues 24–60 (TSSA…SIKI) and 113–142 (RNQK…KSYD). Basic and acidic residues-rich tracts occupy residues 28 to 38 (SEEHGDSDKKL) and 114 to 130 (NQKE…EKEP). Residues 256–634 (VQCPIPPEIA…AHWKERAAKE (379 aa)) enclose the PDEase domain. His-333 serves as the catalytic Proton donor. Residues His-337, His-373, Asp-374, and Asp-480 each coordinate a divalent metal cation. Disordered stretches follow at residues 564–597 (DSLF…TSPS) and 630–664 (RAAK…VTTN). Positions 630 to 644 (RAAKEEEERKIKEAA) are enriched in basic and acidic residues.

It belongs to the cyclic nucleotide phosphodiesterase family. As to quaternary structure, interacts with cmd-1 in the presence of Ca(2+). The cofactor is a divalent metal cation. As to expression, expressed in AFD thermosensory neurons.

The enzyme catalyses a nucleoside 3',5'-cyclic phosphate + H2O = a nucleoside 5'-phosphate + H(+). In terms of biological role, redundantly with pde-5, plays a role in the AFD thermosensory neurons to regulate microvilli receptive ending morphology, possibly by regulating cGMP levels. The sequence is that of Probable 3',5'-cyclic phosphodiesterase pde-1 (pde-1) from Caenorhabditis elegans.